The chain runs to 198 residues: Nicotinamidase 3 (198 aa).

The protein belongs to the isochorismatase family.

The enzyme catalyses nicotinamide + H2O = nicotinate + NH4(+). The protein operates within cofactor biosynthesis; nicotinate biosynthesis; nicotinate from nicotinamide: step 1/1. Catalyzes the deamidation of nicotinamide, an early step in the NAD(+) salvage pathway. Prevents the accumulation of intracellular nicotinamide, a known inhibitor of poly(ADP-ribose) polymerases (PARP enzymes). This chain is Nicotinamidase 3, found in Arabidopsis thaliana (Mouse-ear cress).